The following is a 119-amino-acid chain: Large ribosomal subunit protein uL18 (119 aa).

The protein belongs to the universal ribosomal protein uL18 family. In terms of assembly, part of the 50S ribosomal subunit; part of the 5S rRNA/L5/L18/L25 subcomplex. Contacts the 5S and 23S rRNAs.

Functionally, this is one of the proteins that bind and probably mediate the attachment of the 5S RNA into the large ribosomal subunit, where it forms part of the central protuberance. The sequence is that of Large ribosomal subunit protein uL18 from Clostridium kluyveri (strain ATCC 8527 / DSM 555 / NBRC 12016 / NCIMB 10680 / K1).